The sequence spans 222 residues: Inositol diphosphatase DSP1 (222 aa).

A compositionally biased stretch (polar residues) spans 1–14 (MRQEATCSLVLTQD). The tract at residues 1 to 41 (MRQEATCSLVLTQDAQHRKNQPPLAEEDDDRDHTDDAMPPP) is disordered. The Tyrosine-protein phosphatase domain maps to 68–222 (NFAMVDHGVY…LKHLPASFSC (155 aa)). The tract at residues 124 to 136 (FGIDGSKEPFVNI) is WPD loop important for active site topology. 1D-myo-inositol hexakisphosphate-binding residues include Asn-135, Ile-136, and Arg-140. The active-site Phosphocysteine intermediate is the Cys-160.

Belongs to the protein-tyrosine phosphatase family. Atypical dual-specificity phosphatase Siw14-like subfamily.

The protein resides in the nucleus. It localises to the cytoplasm. The enzyme catalyses 5-diphospho-1D-myo-inositol 1,2,3,4,6-pentakisphosphate + H2O = 1D-myo-inositol hexakisphosphate + phosphate + H(+). It carries out the reaction 1,5-bis(diphospho)-1D-myo-inositol 2,3,4,6-tetrakisphosphate + H2O = 1-diphospho-1D-myo-inositol 2,3,4,5,6-pentakisphosphate + phosphate + 2 H(+). It catalyses the reaction 3,5-bis(diphospho)-1D-myo-inositol 1,2,4,6-tetrakisphosphate + H2O = 3-diphospho-1D-myo-inositol 1,2,4,5,6-pentakisphosphate + phosphate + 2 H(+). The catalysed reaction is 6-diphospho-1D-myo-inositol pentakisphosphate + H2O = 1D-myo-inositol hexakisphosphate + phosphate + H(+). In terms of biological role, cleaves the beta-phosphate at the 5-position of soluble inositol pyrophosphates. Has highest activity on 5-diphosphoinositol 1,2,3,4,6-pentakisphosphate (5-InsP(7)). Possesses phosphotyrosine phosphatase activity in vitro. May contribute to regulation of drought stress responses. The polypeptide is Inositol diphosphatase DSP1 (Oryza sativa subsp. japonica (Rice)).